The primary structure comprises 317 residues: Beta-ketoacyl-[acyl-carrier-protein] synthase III (317 aa).

Active-site residues include C112 and H244. The ACP-binding stretch occupies residues 245 to 249; that stretch reads QANLR. N274 is an active-site residue.

Belongs to the thiolase-like superfamily. FabH family. As to quaternary structure, homodimer.

It localises to the cytoplasm. The enzyme catalyses malonyl-[ACP] + acetyl-CoA + H(+) = 3-oxobutanoyl-[ACP] + CO2 + CoA. The protein operates within lipid metabolism; fatty acid biosynthesis. Catalyzes the condensation reaction of fatty acid synthesis by the addition to an acyl acceptor of two carbons from malonyl-ACP. Catalyzes the first condensation reaction which initiates fatty acid synthesis and may therefore play a role in governing the total rate of fatty acid production. Possesses both acetoacetyl-ACP synthase and acetyl transacylase activities. Its substrate specificity determines the biosynthesis of branched-chain and/or straight-chain of fatty acids. In Shigella dysenteriae serotype 1 (strain Sd197), this protein is Beta-ketoacyl-[acyl-carrier-protein] synthase III.